The sequence spans 359 residues: MNIYDQLQAVEDRYEELGELLSDPEVVSDTKRFMELSREEANTRETVIAYREYKQVIQNISDAEEMIKEASGDADLEEMAKEELKKSKAAKEEYEERLKILLLPKDPNDDKNIILEIRGAAGGDEAALFAGDLLAMYQKYAETQGWRFEVMEASYNGVGGIKEVVAMVSGESVYSKLKYESGAHRVQRVPVTESQGRVHTSTATVLVMPEVEEMEYEIDPKDLRVDIYHASGAGGQNVNKVATAVRMVHIPTGIKVEMQEERTQQKNRDKALKIIRARVADHFAQIAQDEQDAERKSTVGTGDRSERIRTYNFPQNRVTDHRIGLTLQKLDTILAGKMDEVIDALVLYDQTQKLEELNK.

Glutamine 236 carries the post-translational modification N5-methylglutamine.

It belongs to the prokaryotic/mitochondrial release factor family. Methylated by PrmC. Methylation increases the termination efficiency of RF1.

The protein localises to the cytoplasm. In terms of biological role, peptide chain release factor 1 directs the termination of translation in response to the peptide chain termination codons UAG and UAA. The sequence is that of Peptide chain release factor 1 from Streptococcus thermophilus (strain ATCC BAA-250 / LMG 18311).